A 262-amino-acid chain; its full sequence is Probable carboxylesterase Culp3 (262 aa).

The first 41 residues, 1 to 41 (MNNRPIRLLTSGRAGLGAGALITAVVLLIALGAVWTLVAFA), serve as a signal peptide directing secretion. A disulfide bond links C44 and C114. The Nucleophile role is filled by S125. Residues C188 and C195 are joined by a disulfide bond. D192 is an active-site residue. Residue H206 is the Proton donor/acceptor of the active site. The segment at 241–262 (LPGSVLQMPGTAAPAPESLHGR) is disordered.

This sequence belongs to the cutinase family.

The protein localises to the secreted. The sequence is that of Probable carboxylesterase Culp3 (cut3) from Mycobacterium tuberculosis (strain CDC 1551 / Oshkosh).